The following is a 1066-amino-acid chain: Zinc finger and BTB domain-containing protein 21 (1066 aa).

In terms of domain architecture, BTB spans 30-96 (CDVLLIVGDQ…IYSSSLFVEK (67 aa)). Residues 30-96 (CDVLLIVGDQ…IYSSSLFVEK (67 aa)) are mediates homodimerization. Residue lysine 40 forms a Glycyl lysine isopeptide (Lys-Gly) (interchain with G-Cter in SUMO1); alternate linkage. Lysine 40 is covalently cross-linked (Glycyl lysine isopeptide (Lys-Gly) (interchain with G-Cter in SUMO2); alternate). Positions 154–177 (SRNEAQGKTVSQNQPDVSHTSRPS) are enriched in polar residues. The interval 154–196 (SRNEAQGKTVSQNQPDVSHTSRPSPSIAVKANTNKPHVPKPIE) is disordered. Glycyl lysine isopeptide (Lys-Gly) (interchain with G-Cter in SUMO2) cross-links involve residues lysine 255, lysine 266, lysine 273, lysine 312, and lysine 337. Phosphoserine occurs at positions 345 and 381. Lysine 383 is covalently cross-linked (Glycyl lysine isopeptide (Lys-Gly) (interchain with G-Cter in SUMO2)). Positions 388-399 (DCSEKTALDDRP) are enriched in basic and acidic residues. 3 disordered regions span residues 388–442 (DCSE…DPSD), 454–485 (TAAA…AKRR), and 498–525 (KVNE…ADFP). A phosphoserine mark is found at serine 411 and serine 422. Residue lysine 430 forms a Glycyl lysine isopeptide (Lys-Gly) (interchain with G-Cter in SUMO2) linkage. Phosphothreonine is present on threonine 431. 3 positions are modified to phosphoserine: serine 434, serine 435, and serine 438. Residues 466–478 (LSLKTEDDQKDMS) are compositionally biased toward basic and acidic residues. Glycyl lysine isopeptide (Lys-Gly) (interchain with G-Cter in SUMO2) cross-links involve residues lysine 469 and lysine 475. 2 consecutive C2H2-type zinc fingers follow at residues 546-569 (FKCK…NMYH) and 575-598 (YACD…QTQH). Serine 605 bears the Phosphoserine mark. Glycyl lysine isopeptide (Lys-Gly) (interchain with G-Cter in SUMO2) cross-links involve residues lysine 617, lysine 643, and lysine 659. The segment at 670 to 692 (YICTYCGKAYRFLSQFKQHIKMH) adopts a C2H2-type 3 zinc-finger fold. A Glycyl lysine isopeptide (Lys-Gly) (interchain with G-Cter in SUMO2) cross-link involves residue lysine 702. The residue at position 714 (serine 714) is a Phosphoserine. The C2H2-type 4; atypical zinc-finger motif lies at 748–770 (AVCPYCSLRFFSPELKQEHESKC). Residues lysine 763 and lysine 785 each participate in a glycyl lysine isopeptide (Lys-Gly) (interchain with G-Cter in SUMO2) cross-link. A C2H2-type 5 zinc finger spans residues 775-798 (LTCLECMRTFKSSFSIWRHQVEVH). Residues 806–840 (TENFSLPVLDHNGDVTGSSRPQSQPEPNKVNHIVT) are disordered. The segment covering 820-831 (VTGSSRPQSQPE) has biased composition (polar residues). Lysine 875 participates in a covalent cross-link: Glycyl lysine isopeptide (Lys-Gly) (interchain with G-Cter in SUMO2). Lysine 879 is covalently cross-linked (Glycyl lysine isopeptide (Lys-Gly) (interchain with G-Cter in SUMO1); alternate). A Glycyl lysine isopeptide (Lys-Gly) (interchain with G-Cter in SUMO2); alternate cross-link involves residue lysine 879. Residues 879 to 906 (KEEPVEEAEEEAPEASTAPKEAGPSKEA) are disordered. The span at 882-891 (PVEEAEEEAP) shows a compositional bias: acidic residues. The segment at 909–932 (WPCEKCGKMFTVHKQLERHQELLC) adopts a C2H2-type 6; atypical zinc-finger fold. Lysine 935 participates in a covalent cross-link: Glycyl lysine isopeptide (Lys-Gly) (interchain with G-Cter in SUMO2). A C2H2-type 7 zinc finger spans residues 937 to 959 (FICHVCNKAFRTNFRLWSHFQSH). The interval 963 to 1014 (ASEESAHKESEVCPVPTNSPSPPPLPPPPPLPKIQPLEPDSPTGLSENPTPA) is disordered. The segment covering 979–995 (TNSPSPPPLPPPPPLPK) has biased composition (pro residues). A Phosphoserine modification is found at serine 1003. A C2H2-type 8 zinc finger spans residues 1043-1065 (FMCKLCHRTFKTAFSLWSHEQTH).

In terms of assembly, homodimer. Interacts with ZBTB14. Ubiquitous in fetal and adult tissues.

Its subcellular location is the nucleus. Acts as a transcription repressor. This chain is Zinc finger and BTB domain-containing protein 21 (ZBTB21), found in Homo sapiens (Human).